The chain runs to 316 residues: tRNA dimethylallyltransferase (316 aa).

17–24 (GPTASGKT) is an ATP binding site. 19 to 24 (TASGKT) contacts substrate. Interaction with substrate tRNA regions lie at residues 42–45 (DSAL), 166–170 (QRLSR), and 247–252 (RCVGYR).

It belongs to the IPP transferase family. Monomer. Requires Mg(2+) as cofactor.

It catalyses the reaction adenosine(37) in tRNA + dimethylallyl diphosphate = N(6)-dimethylallyladenosine(37) in tRNA + diphosphate. Functionally, catalyzes the transfer of a dimethylallyl group onto the adenine at position 37 in tRNAs that read codons beginning with uridine, leading to the formation of N6-(dimethylallyl)adenosine (i(6)A). In Salmonella paratyphi A (strain ATCC 9150 / SARB42), this protein is tRNA dimethylallyltransferase.